The chain runs to 360 residues: Phospho-N-acetylmuramoyl-pentapeptide-transferase (360 aa).

10 helical membrane passes run 27–47, 73–93, 94–114, 132–152, 168–188, 199–219, 236–256, 263–283, 288–308, and 338–358; these read IVSL…MIAW, TMGG…WANL, SNPY…VGFV, WKYF…YSIG, VMPQ…VGTS, GLAI…AWAT, ASEL…FLWF, VFMG…IAVL, FLLV…ILQV, and VIVR…ATLK.

It belongs to the glycosyltransferase 4 family. MraY subfamily. Mg(2+) serves as cofactor.

The protein resides in the cell inner membrane. The catalysed reaction is UDP-N-acetyl-alpha-D-muramoyl-L-alanyl-gamma-D-glutamyl-meso-2,6-diaminopimeloyl-D-alanyl-D-alanine + di-trans,octa-cis-undecaprenyl phosphate = di-trans,octa-cis-undecaprenyl diphospho-N-acetyl-alpha-D-muramoyl-L-alanyl-D-glutamyl-meso-2,6-diaminopimeloyl-D-alanyl-D-alanine + UMP. It participates in cell wall biogenesis; peptidoglycan biosynthesis. Its function is as follows. Catalyzes the initial step of the lipid cycle reactions in the biosynthesis of the cell wall peptidoglycan: transfers peptidoglycan precursor phospho-MurNAc-pentapeptide from UDP-MurNAc-pentapeptide onto the lipid carrier undecaprenyl phosphate, yielding undecaprenyl-pyrophosphoryl-MurNAc-pentapeptide, known as lipid I. This Pectobacterium atrosepticum (strain SCRI 1043 / ATCC BAA-672) (Erwinia carotovora subsp. atroseptica) protein is Phospho-N-acetylmuramoyl-pentapeptide-transferase.